The sequence spans 244 residues: CTD nuclear envelope phosphatase 1 (244 aa).

Residues 7–29 form a helical membrane-spanning segment; sequence LLGLRTFVAFAAKLWSFFIYLLR. An FCP1 homology domain is found at 57–224; it reads AQVKRKILVL…LNLLPMLDAL (168 aa).

The protein belongs to the dullard family. In terms of assembly, (Microbial infection) Interacts with Chandipura virus matrix protein. Interacts with CNEP1R1; the complex dephosphorylates LPIN1 and LPIN2. In terms of tissue distribution, muscle specific with lower expression in other metabolic tissues.

The protein resides in the endoplasmic reticulum membrane. It is found in the nucleus membrane. The enzyme catalyses O-phospho-L-seryl-[protein] + H2O = L-seryl-[protein] + phosphate. It carries out the reaction O-phospho-L-threonyl-[protein] + H2O = L-threonyl-[protein] + phosphate. Functionally, serine/threonine protein phosphatase forming with CNEP1R1 an active phosphatase complex that dephosphorylates and may activate LPIN1 and LPIN2. LPIN1 and LPIN2 are phosphatidate phosphatases that catalyze the conversion of phosphatidic acid to diacylglycerol and control the metabolism of fatty acids at different levels. May indirectly modulate the lipid composition of nuclear and/or endoplasmic reticulum membranes and be required for proper nuclear membrane morphology and/or dynamics. May also indirectly regulate the production of lipid droplets and triacylglycerol. May antagonize BMP signaling. The polypeptide is CTD nuclear envelope phosphatase 1 (CTDNEP1) (Homo sapiens (Human)).